The primary structure comprises 594 residues: MHEHLKEKLAILPDQPGCYLMKDKQGTVIYVGKAKVLKNRVRSYFTGSHDGKTLRLVGEIVDFEYIVTSSNLEALILELNLIKKHDPKYNIQLKDDKTYPFIKITAEKQPRLLITRNVKKDKGKYFGPYPNAQSAHETKKLLDRMYPLRKCSNMPDKVCLYYHMGQCLAPCVKEVTEEQNKEIVDEIIKFLNGGHKEVRSELETKMYEASEKLEFERAKELRDQIAHIDAIMEKQKMIMSDLVDRDVFGYAVDKGWMCVQVFFVRKGKLIERDVSMFPIYDEPEEGFLTFIGQFYENSSHFKPKEIVVPGSIDSELVERFLEVEATQPKRGKKKDLVELANKNAKIALEEKFYLIERDEERTIKAVENLGKQLGIETPYRIEAFDNSNIQGTNPVSAMIAFIDGKPAKKEYRKYKIKTVQGPDDYESMREVVRRRYTRALKEGLPLPDLIIIDGGKGHLAAASDVLENELGLYIPMAGLVKDDKHKTSHLIIGDPPEPVMLERNSQEFYLLQRIQDEVHRFAITFHRQLHGKSVIQSALDDIPGIGDKRKKILLKHFGSLKKMKEASVTEFVEAGMPKNVAETIYSYLADKKTL.

In terms of domain architecture, GIY-YIG spans 14-91 (DQPGCYLMKD…IKKHDPKYNI (78 aa)). The UVR domain occupies 196–231 (KEVRSELETKMYEASEKLEFERAKELRDQIAHIDAI).

It belongs to the UvrC family. As to quaternary structure, interacts with UvrB in an incision complex.

The protein localises to the cytoplasm. In terms of biological role, the UvrABC repair system catalyzes the recognition and processing of DNA lesions. UvrC both incises the 5' and 3' sides of the lesion. The N-terminal half is responsible for the 3' incision and the C-terminal half is responsible for the 5' incision. This chain is UvrABC system protein C, found in Bacillus cereus (strain AH187).